Consider the following 112-residue polypeptide: Large ribosomal subunit protein eL31 (112 aa).

Belongs to the eukaryotic ribosomal protein eL31 family. Component of the large ribosomal subunit. Mature ribosomes consist of a small (40S) and a large (60S) subunit. The 40S subunit contains about 32 different proteins and 1 molecule of RNA (18S). The 60S subunit contains 45 different proteins and 3 molecules of RNA (25S, 5.8S and 5S).

The protein localises to the cytoplasm. In terms of biological role, component of the ribosome, a large ribonucleoprotein complex responsible for the synthesis of proteins in the cell. The small ribosomal subunit (SSU) binds messenger RNAs (mRNAs) and translates the encoded message by selecting cognate aminoacyl-transfer RNA (tRNA) molecules. The large subunit (LSU) contains the ribosomal catalytic site termed the peptidyl transferase center (PTC), which catalyzes the formation of peptide bonds, thereby polymerizing the amino acids delivered by tRNAs into a polypeptide chain. The nascent polypeptides leave the ribosome through a tunnel in the LSU and interact with protein factors that function in enzymatic processing, targeting, and the membrane insertion of nascent chains at the exit of the ribosomal tunnel. In Candida albicans (strain SC5314 / ATCC MYA-2876) (Yeast), this protein is Large ribosomal subunit protein eL31.